Here is a 172-residue protein sequence, read N- to C-terminus: Adenine phosphoribosyltransferase (172 aa).

It belongs to the purine/pyrimidine phosphoribosyltransferase family. As to quaternary structure, homodimer.

The protein resides in the cytoplasm. The enzyme catalyses AMP + diphosphate = 5-phospho-alpha-D-ribose 1-diphosphate + adenine. It functions in the pathway purine metabolism; AMP biosynthesis via salvage pathway; AMP from adenine: step 1/1. Functionally, catalyzes a salvage reaction resulting in the formation of AMP, that is energically less costly than de novo synthesis. The chain is Adenine phosphoribosyltransferase from Alkaliphilus oremlandii (strain OhILAs) (Clostridium oremlandii (strain OhILAs)).